A 476-amino-acid polypeptide reads, in one-letter code: Proline dehydrogenase 2, mitochondrial (476 aa).

A mitochondrion-targeting transit peptide spans 1–29 (MANRFLRPNLIHRFSTVSPVGPPTTIIPE).

Belongs to the proline oxidase family. FAD serves as cofactor. In terms of tissue distribution, expressed in the vascular tissue and in the abscission zone of petals, sepals, stamina, pistils and siliques. Not detected in petioles.

The protein localises to the mitochondrion. The catalysed reaction is L-proline + a quinone = (S)-1-pyrroline-5-carboxylate + a quinol + H(+). Its pathway is amino-acid degradation; L-proline degradation into L-glutamate; L-glutamate from L-proline: step 1/2. In terms of biological role, converts proline to delta-1-pyrroline-5-carboxylate. The protein is Proline dehydrogenase 2, mitochondrial (POX2) of Arabidopsis thaliana (Mouse-ear cress).